The sequence spans 710 residues: Prolyl endopeptidase (710 aa).

Position 1 is an N-acetylmethionine (M1). K157 bears the N6-acetyllysine mark. Residues S554, D641, and H680 each act as charge relay system in the active site.

It belongs to the peptidase S9A family.

The protein localises to the cytoplasm. The catalysed reaction is Hydrolysis of Pro-|-Xaa &gt;&gt; Ala-|-Xaa in oligopeptides.. Functionally, cleaves peptide bonds on the C-terminal side of prolyl residues within peptides that are up to approximately 30 amino acids long. This is Prolyl endopeptidase (Prep) from Mus musculus (Mouse).